Reading from the N-terminus, the 163-residue chain is Endoribonuclease YbeY (163 aa).

The Zn(2+) site is built by His-121, His-125, and His-131.

The protein belongs to the endoribonuclease YbeY family. Zn(2+) is required as a cofactor.

The protein resides in the cytoplasm. Its function is as follows. Single strand-specific metallo-endoribonuclease involved in late-stage 70S ribosome quality control and in maturation of the 3' terminus of the 16S rRNA. The sequence is that of Endoribonuclease YbeY from Synechococcus sp. (strain JA-3-3Ab) (Cyanobacteria bacterium Yellowstone A-Prime).